A 254-amino-acid polypeptide reads, in one-letter code: MADSPNRLNRAKIDSTTMKDPRVLNNLKLRELLLPKFTSLWEIQTEVTVDNRTILLTWMHLLCESFELDKSVFPLSVSILDRYLCKKQGTKKTLQKIGAACVLIGSKIRTVKPMTVSKLTYLSCDCFTNLELINQEKDILEALKWDTEAVLATDFLIPLCNALKIPEDLWPQLYEAASTTICKALIQPNIALLSPGLICAGGLLTTIETDNTNCRPWTCYLEDLSSILNFSTNTVRTVKDQVSEAFSLYDLEIL.

The protein belongs to the cyclin family. Cyclin D subfamily.

May be highly relevant to the process of cellular transformation and rapid T-cell proliferation effected by HVS during latent infections of T-cells in susceptible hosts. The sequence is that of Cyclin homolog (72) from Saimiriine herpesvirus 2 (strain 11) (SaHV-2).